A 396-amino-acid chain; its full sequence is L-lactate dehydrogenase (396 aa).

The 380-residue stretch at 1–380 (MIISAASDYR…TQDSLVQGLG (380 aa)) folds into the FMN hydroxy acid dehydrogenase domain. Position 24 (Tyr24) interacts with substrate. The FMN site is built by Ser106 and Gln127. Tyr129 lines the substrate pocket. FMN is bound at residue Thr155. Residue Arg164 participates in substrate binding. Lys251 contributes to the FMN binding site. The active-site Proton acceptor is His275. Position 278 (Arg278) interacts with substrate. 306 to 330 (DSGIRNGLDVVRMIALGADTVLLGR) is a binding site for FMN.

This sequence belongs to the FMN-dependent alpha-hydroxy acid dehydrogenase family. It depends on FMN as a cofactor.

It localises to the cell inner membrane. It carries out the reaction (S)-lactate + A = pyruvate + AH2. In terms of biological role, catalyzes the conversion of L-lactate to pyruvate. Is coupled to the respiratory chain. The polypeptide is L-lactate dehydrogenase (Shigella flexneri serotype 5b (strain 8401)).